Reading from the N-terminus, the 416-residue chain is Glutamyl-tRNA reductase (416 aa).

Residues 49–52 (TCNR), Ser105, 110–112 (EPQ), and Gln116 contribute to the substrate site. Cys50 (nucleophile) is an active-site residue. 185–190 (GAGETI) is an NADP(+) binding site.

Belongs to the glutamyl-tRNA reductase family. In terms of assembly, homodimer.

It carries out the reaction (S)-4-amino-5-oxopentanoate + tRNA(Glu) + NADP(+) = L-glutamyl-tRNA(Glu) + NADPH + H(+). It participates in porphyrin-containing compound metabolism; protoporphyrin-IX biosynthesis; 5-aminolevulinate from L-glutamyl-tRNA(Glu): step 1/2. Functionally, catalyzes the NADPH-dependent reduction of glutamyl-tRNA(Glu) to glutamate 1-semialdehyde (GSA). This chain is Glutamyl-tRNA reductase, found in Shewanella baltica (strain OS223).